We begin with the raw amino-acid sequence, 648 residues long: Transcriptional regulator ManR (648 aa).

PRD domains are found at residues 187–292 (KFLH…YPLQ) and 297–404 (LENA…MQGS). Phosphohistidine; by HPr occurs at positions 222, 281, 334, and 393. A PTS EIIB type-2 domain is found at 409–500 (KKAVIVCHMG…FIRQLGESHR (92 aa)). A Phosphocysteine; by EIIA modification is found at Cys-415. Positions 510–648 (NNTTPFLVFL…VMTFLSHLDY (139 aa)) constitute a PTS EIIA type-2 domain. Phosphohistidine; by EIIB is present on His-570.

This sequence belongs to the transcriptional antiterminator BglG family.

The enzyme catalyses D-mannose(out) + N(pros)-phospho-L-histidyl-[protein] = D-mannose 6-phosphate(in) + L-histidyl-[protein]. With respect to regulation, the regulatory activity of ManR is modulated by phosphorylation and dephosphorylation of the various ManR domains. It becomes activated via phosphoryl group transfer from PEP, EI and HPr on the two conserved histidine residues in the PRD 2 domain, whereas phosphorylation of the EIIA-like domain on His-570 by the PTS EIIB-Man domain of ManP inactivates ManR. Its function is as follows. Positively regulates the expression of the mannose operon that consists of three genes, manP, manA, and yjdF, which are responsible for the transport and utilization of mannose. Also activates its own expression. In Bacillus subtilis (strain 168), this protein is Transcriptional regulator ManR (manR).